The primary structure comprises 279 residues: Movement protein (279 aa).

A disordered region spans residues S246 to L279. Residues E254–S268 show a composition bias toward low complexity.

Belongs to the cucumovirus movement protein family.

It is found in the host cell junction. The protein localises to the host plasmodesma. Transports viral genome to neighboring plant cells directly through plasmosdesmata, without any budding. The movement protein allows efficient cell to cell propagation, by bypassing the host cell wall barrier. Acts by forming a tubular structure at the host plasmodesmata, enlarging it enough to allow free passage of virion capsids. The chain is Movement protein from Cucurbita pepo (Vegetable marrow).